A 350-amino-acid chain; its full sequence is D-alanine--D-alanine ligase (350 aa).

The ATP-grasp domain maps to 135–335 (KLYAKNLGVK…LAQSLPKTPK (201 aa)). 164 to 219 (KPSFNFPFIVKPNNAGSSLGVSVVKEEKELAYALDGAFEYSKEVLIEPFIQRVKEY) contributes to the ATP binding site. Mg(2+) is bound by residues aspartate 291, glutamate 303, and asparagine 305.

This sequence belongs to the D-alanine--D-alanine ligase family. Mg(2+) is required as a cofactor. It depends on Mn(2+) as a cofactor.

The protein localises to the cytoplasm. The catalysed reaction is 2 D-alanine + ATP = D-alanyl-D-alanine + ADP + phosphate + H(+). It functions in the pathway cell wall biogenesis; peptidoglycan biosynthesis. Cell wall formation. The chain is D-alanine--D-alanine ligase from Helicobacter acinonychis (strain Sheeba).